The sequence spans 451 residues: Bifunctional protein GlmU (451 aa).

The interval 1-225 (MLEIIILAAG…EYEVLGVNNR (225 aa)) is pyrophosphorylase. UDP-N-acetyl-alpha-D-glucosamine is bound by residues 7–10 (LAAG), lysine 21, glutamine 72, 77–78 (GT), 99–101 (YGD), glycine 136, glutamate 150, asparagine 165, and asparagine 223. Aspartate 101 serves as a coordination point for Mg(2+). Asparagine 223 serves as a coordination point for Mg(2+). The interval 226-246 (LQQAELERIFQRQVAEELMVA) is linker. Residues 247–451 (GATLLDPARL…IKGWARPVKK (205 aa)) are N-acetyltransferase. Positions 329 and 347 each coordinate UDP-N-acetyl-alpha-D-glucosamine. Residue histidine 359 is the Proton acceptor of the active site. UDP-N-acetyl-alpha-D-glucosamine is bound by residues tyrosine 362 and asparagine 373. Acetyl-CoA contacts are provided by residues alanine 376, 382 to 383 (NY), serine 401, alanine 419, and arginine 436.

In the N-terminal section; belongs to the N-acetylglucosamine-1-phosphate uridyltransferase family. This sequence in the C-terminal section; belongs to the transferase hexapeptide repeat family. Homotrimer. Requires Mg(2+) as cofactor.

It localises to the cytoplasm. The catalysed reaction is alpha-D-glucosamine 1-phosphate + acetyl-CoA = N-acetyl-alpha-D-glucosamine 1-phosphate + CoA + H(+). The enzyme catalyses N-acetyl-alpha-D-glucosamine 1-phosphate + UTP + H(+) = UDP-N-acetyl-alpha-D-glucosamine + diphosphate. It functions in the pathway nucleotide-sugar biosynthesis; UDP-N-acetyl-alpha-D-glucosamine biosynthesis; N-acetyl-alpha-D-glucosamine 1-phosphate from alpha-D-glucosamine 6-phosphate (route II): step 2/2. Its pathway is nucleotide-sugar biosynthesis; UDP-N-acetyl-alpha-D-glucosamine biosynthesis; UDP-N-acetyl-alpha-D-glucosamine from N-acetyl-alpha-D-glucosamine 1-phosphate: step 1/1. It participates in bacterial outer membrane biogenesis; LPS lipid A biosynthesis. Catalyzes the last two sequential reactions in the de novo biosynthetic pathway for UDP-N-acetylglucosamine (UDP-GlcNAc). The C-terminal domain catalyzes the transfer of acetyl group from acetyl coenzyme A to glucosamine-1-phosphate (GlcN-1-P) to produce N-acetylglucosamine-1-phosphate (GlcNAc-1-P), which is converted into UDP-GlcNAc by the transfer of uridine 5-monophosphate (from uridine 5-triphosphate), a reaction catalyzed by the N-terminal domain. This chain is Bifunctional protein GlmU, found in Saccharophagus degradans (strain 2-40 / ATCC 43961 / DSM 17024).